The sequence spans 64 residues: Large ribosomal subunit protein uL29 (64 aa).

Belongs to the universal ribosomal protein uL29 family.

The chain is Large ribosomal subunit protein uL29 from Nitrosomonas europaea (strain ATCC 19718 / CIP 103999 / KCTC 2705 / NBRC 14298).